A 769-amino-acid chain; its full sequence is MAIFELFSFDIDKLLVWVSKFSPGKILSAICRLGLDSWNNFRKWFWGLNFDKHEWAVDHFMPLMPRFSSDMDEVAKRIVTPKSKPKLEDCLEIDTAVEECFNEECFEPQEDGSMKLKRVAAPQQIKRVRTGMIEDAISAVEARIRNRHMIMGDDMGLVDEAAVRATAMDICGEYKINEHHTRCIIYAAAYRAMTPDQESIDATKMAYNPKSQARRDLVSILRKNISFGGFKSLEDFLSAPVSFPVEDAPYQILGIPEIKVADKRASRVCKFKRVVGLPSLSAGQSVCVHKTSLHNMIVSLEQRVFRVKNETGEFVVPPQPSKGAFDSISYFREAWKKKLYSKGPVVKSSIDDVVACYSSEKKKLYQKGAATLSHRPLHWRDSKVRAFIKVEKLECDKKAPVPRTIQPRSKRYNLCIGRYLRLNEKRMLDAIDAVFGEKTVLSGLDNKAQGRAIAKKWSKYESPIGIGLDASRFDQHCSKDALKFEHSFYRECFPDDKTSPDLLDWQLENEGSALMPTESLVKYRTRCRMSGDINTGLGNKILMCSMVHAYLKEVGVNASLANNGDDCVLFCEKGDFNRINDSLREWFLCRGFNMVVEEPVECLERVVFCRSQPVCVATKWAMVRQLGSLSRDCFSTQNWLNPTTFRDAMNALGQCNGIINDGVPVHMAQAKRMYAAGGNRKFDLKALHKQMEYSWRDRLGARTNLLWSEVEDSTRLSYFRAFGIEPAVQRIVEGYFSESKISEEGRQTNFLPTHYSRLHKDLLVPRYLN.

Residues 463 to 579 enclose the RdRp catalytic domain; that stretch reads PIGIGLDASR…FCEKGDFNRI (117 aa).

Belongs to the tombusviridae RNA polymerase family.

It catalyses the reaction RNA(n) + a ribonucleoside 5'-triphosphate = RNA(n+1) + diphosphate. In terms of biological role, probable polymerase. In Dianthus barbatus (Carnation), this protein is RNA-directed RNA polymerase.